Here is a 349-residue protein sequence, read N- to C-terminus: tRNA-specific 2-thiouridylase MnmA (349 aa).

ATP contacts are provided by residues 6–13 and Met-32; that span reads LLSGGVDS. Cys-103 functions as the Nucleophile in the catalytic mechanism. A disulfide bridge connects residues Cys-103 and Cys-195. Gly-127 contributes to the ATP binding site. Residues 145–147 form an interaction with tRNA region; it reads KDQ. The Cysteine persulfide intermediate role is filled by Cys-195.

This sequence belongs to the MnmA/TRMU family.

It is found in the cytoplasm. It carries out the reaction S-sulfanyl-L-cysteinyl-[protein] + uridine(34) in tRNA + AH2 + ATP = 2-thiouridine(34) in tRNA + L-cysteinyl-[protein] + A + AMP + diphosphate + H(+). Functionally, catalyzes the 2-thiolation of uridine at the wobble position (U34) of tRNA, leading to the formation of s(2)U34. This Pseudothermotoga lettingae (strain ATCC BAA-301 / DSM 14385 / NBRC 107922 / TMO) (Thermotoga lettingae) protein is tRNA-specific 2-thiouridylase MnmA.